Consider the following 24-residue polypeptide: 47 kDa cell wall protein (24 aa).

It localises to the secreted. The protein resides in the cell wall. This Nicotiana tabacum (Common tobacco) protein is 47 kDa cell wall protein.